Reading from the N-terminus, the 192-residue chain is Imidazole glycerol phosphate synthase subunit HisH (192 aa).

Positions 1-192 constitute a Glutamine amidotransferase type-1 domain; that stretch reads MIAIIDYGLG…QALKGGFIND (192 aa). Residue cysteine 77 is the Nucleophile of the active site. Residues histidine 169 and glutamate 171 contribute to the active site.

As to quaternary structure, heterodimer of HisH and HisF.

It is found in the cytoplasm. The enzyme catalyses 5-[(5-phospho-1-deoxy-D-ribulos-1-ylimino)methylamino]-1-(5-phospho-beta-D-ribosyl)imidazole-4-carboxamide + L-glutamine = D-erythro-1-(imidazol-4-yl)glycerol 3-phosphate + 5-amino-1-(5-phospho-beta-D-ribosyl)imidazole-4-carboxamide + L-glutamate + H(+). The catalysed reaction is L-glutamine + H2O = L-glutamate + NH4(+). Its pathway is amino-acid biosynthesis; L-histidine biosynthesis; L-histidine from 5-phospho-alpha-D-ribose 1-diphosphate: step 5/9. Its function is as follows. IGPS catalyzes the conversion of PRFAR and glutamine to IGP, AICAR and glutamate. The HisH subunit catalyzes the hydrolysis of glutamine to glutamate and ammonia as part of the synthesis of IGP and AICAR. The resulting ammonia molecule is channeled to the active site of HisF. In Staphylococcus epidermidis (strain ATCC 35984 / DSM 28319 / BCRC 17069 / CCUG 31568 / BM 3577 / RP62A), this protein is Imidazole glycerol phosphate synthase subunit HisH.